The chain runs to 260 residues: Indole-3-glycerol phosphate synthase (260 aa).

This sequence belongs to the TrpC family.

It carries out the reaction 1-(2-carboxyphenylamino)-1-deoxy-D-ribulose 5-phosphate + H(+) = (1S,2R)-1-C-(indol-3-yl)glycerol 3-phosphate + CO2 + H2O. The protein operates within amino-acid biosynthesis; L-tryptophan biosynthesis; L-tryptophan from chorismate: step 4/5. This is Indole-3-glycerol phosphate synthase from Neisseria meningitidis serogroup B (strain ATCC BAA-335 / MC58).